A 679-amino-acid chain; its full sequence is Methionine--tRNA ligase (679 aa).

The 'HIGH' region signature appears at 15–25 (PYANGSIHLGH). Residues Cys146, Cys149, Cys159, and Cys162 each contribute to the Zn(2+) site. The short motif at 332 to 336 (KMSKS) is the 'KMSKS' region element. An ATP-binding site is contributed by Lys335. In terms of domain architecture, tRNA-binding spans 577-679 (DFAKVDMRVA…AGALPGMPVK (103 aa)).

The protein belongs to the class-I aminoacyl-tRNA synthetase family. MetG type 1 subfamily. In terms of assembly, homodimer. It depends on Zn(2+) as a cofactor.

It is found in the cytoplasm. The enzyme catalyses tRNA(Met) + L-methionine + ATP = L-methionyl-tRNA(Met) + AMP + diphosphate. Functionally, is required not only for elongation of protein synthesis but also for the initiation of all mRNA translation through initiator tRNA(fMet) aminoacylation. In Sodalis glossinidius (strain morsitans), this protein is Methionine--tRNA ligase.